Here is a 414-residue protein sequence, read N- to C-terminus: Gamma-glutamyl phosphate reductase (414 aa).

This sequence belongs to the gamma-glutamyl phosphate reductase family.

It is found in the cytoplasm. It carries out the reaction L-glutamate 5-semialdehyde + phosphate + NADP(+) = L-glutamyl 5-phosphate + NADPH + H(+). It participates in amino-acid biosynthesis; L-proline biosynthesis; L-glutamate 5-semialdehyde from L-glutamate: step 2/2. Its function is as follows. Catalyzes the NADPH-dependent reduction of L-glutamate 5-phosphate into L-glutamate 5-semialdehyde and phosphate. The product spontaneously undergoes cyclization to form 1-pyrroline-5-carboxylate. The sequence is that of Gamma-glutamyl phosphate reductase from Alkaliphilus metalliredigens (strain QYMF).